Here is a 727-residue protein sequence, read N- to C-terminus: Catalase-peroxidase (727 aa).

A cross-link (tryptophyl-tyrosyl-methioninium (Trp-Tyr) (with M-244)) is located at residues 95–218 (WHSAGTYRII…LAAVQMGLIY (124 aa)). Catalysis depends on histidine 96, which acts as the Proton acceptor. The segment at residues 218–244 (YVNPEGPNGEPDVLGAAKDIKESFGKM) is a cross-link (tryptophyl-tyrosyl-methioninium (Tyr-Met) (with W-95)). Histidine 259 is a binding site for heme b.

The protein belongs to the peroxidase family. Peroxidase/catalase subfamily. Homodimer or homotetramer. Requires heme b as cofactor. In terms of processing, formation of the three residue Trp-Tyr-Met cross-link is important for the catalase, but not the peroxidase activity of the enzyme.

It carries out the reaction H2O2 + AH2 = A + 2 H2O. It catalyses the reaction 2 H2O2 = O2 + 2 H2O. Bifunctional enzyme with both catalase and broad-spectrum peroxidase activity. This Persephonella marina (strain DSM 14350 / EX-H1) protein is Catalase-peroxidase.